Consider the following 246-residue polypeptide: MAAKIPGVIALFDVDGTLTAPRKEATPELLDFIRELRKVVTIGVVGGSDLSKISEQLGKTVTNDYDYCFSENGLVAHKDGKSIGIQSLKLHLGDDKLKELINFTLHYIADLDIPIKRGTFIEFRNGMLNVSPIGRNCSQEERDEFERYDKVQNIRPKMVAELRERFAHLNLTFSIGGQISFDVFPKGWDKTYCLQYLEDFSEIHFFGDKTYEGGNDYEIYESPKTIGHSVTSPDDTVAKCKALFMS.

Catalysis depends on D13, which acts as the Nucleophile. Residues D13 and D15 each contribute to the Mg(2+) site. D15 serves as the catalytic Proton donor/acceptor. Alpha-D-mannose 1-phosphate is bound by residues R22, R124, R135, R142, S180, and D182. Mg(2+)-binding residues include D208, Y220, and T225.

It belongs to the eukaryotic PMM family. As to quaternary structure, homodimer. It depends on Mg(2+) as a cofactor. In terms of tissue distribution, expressed in roots, stems, leaves, flowers and immature fruits.

Its subcellular location is the cytoplasm. The enzyme catalyses alpha-D-mannose 1-phosphate = D-mannose 6-phosphate. It participates in nucleotide-sugar biosynthesis; GDP-alpha-D-mannose biosynthesis; alpha-D-mannose 1-phosphate from D-fructose 6-phosphate: step 2/2. Functionally, catalyzes the interconversion of mannose-6-phosphate to mannose-1-phosphate, the precursor for the synthesis of GDP-mannose. GDP-mannose is an essential sugar nucleotide for the synthesis of D-mannose-containing cell wall polysaccharides (galactomannans and glucomannans), glycolipids, glycoproteins and the antioxidant L-ascorbate. Can complement the yeast temperature-sensitive mutant sec53-6. The protein is Phosphomannomutase of Arabidopsis thaliana (Mouse-ear cress).